Reading from the N-terminus, the 933-residue chain is Isoleucine--tRNA ligase (933 aa).

The 'HIGH' region signature appears at Pro57–His67. Glu556 contacts L-isoleucyl-5'-AMP. The 'KMSKS' region motif lies at Lys597 to Ser601. Lys600 contacts ATP. 4 residues coordinate Zn(2+): Cys891, Cys894, Cys911, and Cys914.

Belongs to the class-I aminoacyl-tRNA synthetase family. IleS type 1 subfamily. As to quaternary structure, monomer. It depends on Zn(2+) as a cofactor.

The protein localises to the cytoplasm. The enzyme catalyses tRNA(Ile) + L-isoleucine + ATP = L-isoleucyl-tRNA(Ile) + AMP + diphosphate. Its function is as follows. Catalyzes the attachment of isoleucine to tRNA(Ile). As IleRS can inadvertently accommodate and process structurally similar amino acids such as valine, to avoid such errors it has two additional distinct tRNA(Ile)-dependent editing activities. One activity is designated as 'pretransfer' editing and involves the hydrolysis of activated Val-AMP. The other activity is designated 'posttransfer' editing and involves deacylation of mischarged Val-tRNA(Ile). The sequence is that of Isoleucine--tRNA ligase from Pediococcus pentosaceus (strain ATCC 25745 / CCUG 21536 / LMG 10740 / 183-1w).